Consider the following 838-residue polypeptide: Xyloglucanase (838 aa).

A signal peptide spans 1-19; the sequence is MKVSRVLALVLGAVIPAHA. Asp-53 serves as the catalytic Nucleophile. N-linked (GlcNAc...) asparagine glycosylation is found at Asn-232 and Asn-436. The active-site Proton donor is Asp-469. The interval 750-801 is disordered; the sequence is GTGGTSSSTKQSSSSTSSASSSTTLRSSVVSTTRASTVTSSRTSSAAGPTGS. Low complexity predominate over residues 754–797; the sequence is TSSSTKQSSSSTSSASSSTTLRSSVVSTTRASTVTSSRTSSAAG. Positions 802–838 constitute a CBM1 domain; that stretch reads GVAGHYAQCGGIGWTGPTQCVAPYVCQKQNDYYYQCV.

Belongs to the glycosyl hydrolase 74 family.

The catalysed reaction is Hydrolysis of (1-&gt;4)-D-glucosidic linkages in xyloglucans so as to successively remove oligosaccharides from the newly-formed chain end after endo-initiation on a polymer molecule.. Functionally, hydrolyzes the glucosidic bonds of unbranched Glc residues in tamarind seed xyloglucan, producing XXXG, XLXG, XXLG and XLLG. Has a low activity against beta-glucan and carboxymethylcellulose. Not active against Avicel, laminarin, xylan, galactomannan, linear and branched arabinans, galactan, polygalacturonic acid, starch, beta-D-Glcp, beta-D-cellobiose, beta-D-Galp, beta-D-Xylp, alpha-D-Xylp, alpha-L-Araf and alpha-L-Arap. In Hypocrea jecorina (strain QM6a) (Trichoderma reesei), this protein is Xyloglucanase.